The following is a 403-amino-acid chain: Accessory Sec system protein translocase subunit SecY2 (403 aa).

The next 10 helical transmembrane spans lie at 17–37 (MLYT…SIVS), 63–83 (LNIF…LMLI), 105–125 (ILTL…YVSK), 131–151 (DNIY…VWLA), 157–177 (YGIA…MMHQ), 186–206 (HIVI…LLFI), 240–260 (ITLM…HFIL), 276–296 (FDSP…GYFL), 339–359 (WFGL…TLFV), and 366–386 (IYFS…AETI).

It belongs to the SecY/SEC61-alpha family. SecY2 subfamily. In terms of assembly, may form heterotrimers with SecE and SecG subunits (Potential). Component of the accessory SecA2/SecY2 protein translocase complex required to export cell wall protein SrpA.

The protein localises to the cell membrane. Functionally, the central subunit of a protein translocation channel (Potential). Part of the accessory SecA2/SecY2 system specifically required to export SraP, a serine-rich repeat cell wall protein encoded upstream in the same operon. In Staphylococcus aureus (strain NCTC 8325 / PS 47), this protein is Accessory Sec system protein translocase subunit SecY2.